The following is a 135-amino-acid chain: MADNFNFELVSPERLLLSEMVTEVVIPATEGEMTVMAHHAPTMTTIKPGVVSVRSASGKKQDYVVFGGFADILPTGCTLLAESAVPVEELHKDELTRRIEAARKELEDTELHEHKSKLEHFIMELTHLRGVVQQD.

It belongs to the ATPase epsilon chain family. In terms of assembly, F-type ATPases have 2 components, CF(1) - the catalytic core - and CF(0) - the membrane proton channel. CF(1) has five subunits: alpha(3), beta(3), gamma(1), delta(1), epsilon(1). CF(0) has three main subunits: a, b and c.

Its subcellular location is the cell inner membrane. Its function is as follows. Produces ATP from ADP in the presence of a proton gradient across the membrane. In Rhizobium leguminosarum bv. trifolii (strain WSM2304), this protein is ATP synthase epsilon chain.